We begin with the raw amino-acid sequence, 444 residues long: Probable D-serine dehydratase (444 aa).

The residue at position 118 (lysine 118) is an N6-(pyridoxal phosphate)lysine.

Belongs to the serine/threonine dehydratase family. DsdA subfamily. Requires pyridoxal 5'-phosphate as cofactor.

It carries out the reaction D-serine = pyruvate + NH4(+). The polypeptide is Probable D-serine dehydratase (Acinetobacter baumannii (strain ACICU)).